Reading from the N-terminus, the 849-residue chain is Protein translocase subunit SecA (849 aa).

ATP contacts are provided by residues glutamine 85, 103 to 107 (GEGKT), and aspartate 493. Residues cysteine 832, cysteine 834, cysteine 843, and histidine 844 each coordinate Zn(2+).

It belongs to the SecA family. As to quaternary structure, monomer and homodimer. Part of the essential Sec protein translocation apparatus which comprises SecA, SecYEG and auxiliary proteins SecDF. Other proteins may also be involved. Zn(2+) is required as a cofactor.

It localises to the cell membrane. It is found in the cytoplasm. The enzyme catalyses ATP + H2O + cellular proteinSide 1 = ADP + phosphate + cellular proteinSide 2.. Part of the Sec protein translocase complex. Interacts with the SecYEG preprotein conducting channel. Has a central role in coupling the hydrolysis of ATP to the transfer of proteins into and across the cell membrane, serving as an ATP-driven molecular motor driving the stepwise translocation of polypeptide chains across the membrane. The chain is Protein translocase subunit SecA from Streptococcus thermophilus (strain ATCC BAA-491 / LMD-9).